The sequence spans 1033 residues: Potassium-transporting ATPase alpha chain 2 (1033 aa).

The Cytoplasmic portion of the chain corresponds to 1 to 96 (MRRKTLEIYS…NALSPPKQTP (96 aa)). The helical transmembrane segment at 97–117 (EIIKFLKQMIGGFSILLWVGA) threads the bilayer. The Lumenal portion of the chain corresponds to 118 to 140 (ILCWIAYGIQYASNQSGSLDNVY). Residues 141-161 (LGVVLALVVILTGIFAYYQEA) traverse the membrane as a helical segment. At 162–297 (KSTNIMSSFS…NEKTPIATEI (136 aa)) the chain is on the cytoplasmic side. The helical transmembrane segment at 298–317 (EHFVHIVAGVAVSIGILFFI) threads the bilayer. The Lumenal portion of the chain corresponds to 318-329 (IAVSLKYRVLDS). The helical transmembrane segment at 330–347 (IIFLIGIIVANVPEGLLA) threads the bilayer. Residues 348-781 (TVTVTLSLTA…EEGRLIFDNL (434 aa)) lie on the Cytoplasmic side of the membrane. The active-site 4-aspartylphosphate intermediate is aspartate 385. Mg(2+)-binding residues include aspartate 726 and aspartate 730. Residues 782-801 (KKTIAYTLTKNIAELCPFLV) form a helical membrane-spanning segment. At 802–811 (YIIVGLPLPI) the chain is on the lumenal side. Residues 812–832 (GTITILFIDLGTDIIPSIALA) form a helical membrane-spanning segment. The Cytoplasmic segment spans residues 833–852 (YEKVESDIMNRKPRHKKKDR). A helical membrane pass occupies residues 853 to 875 (LVNHQLAIYSYLHIGLMQALGAF). The Lumenal segment spans residues 876–927 (LVYFTVYAQQGFWPTSLIQLRVKWEQDYVNDLEDSYGQQWTRYQRKYLEWTG). The helical transmembrane segment at 928 to 947 (YTAFFVGIMVQQIADLIIRK) threads the bilayer. Residues 948–961 (TRRNSIFQQGLFRN) lie on the Cytoplasmic side of the membrane. A Phosphoserine; by PKA modification is found at serine 952. Residues 962–980 (KVIWVGITSQIIVALILSC) form a helical membrane-spanning segment. At 981–995 (GLGSITALNFTMLRV) the chain is on the lumenal side. Residues 996-1016 (QYWFVAVPHAILIWVYDEVRK) form a helical membrane-spanning segment. At 1017–1033 (LFLRLYPGSWWDKNMYY) the chain is on the cytoplasmic side.

This sequence belongs to the cation transport ATPase (P-type) (TC 3.A.3) family. Type IIC subfamily. As to quaternary structure, composed of two subunits: alpha (catalytic) and beta. In terms of tissue distribution, found in skin, kidney and distal colon.

It is found in the membrane. The catalysed reaction is K(+)(out) + ATP + H2O + H(+)(in) = K(+)(in) + ADP + phosphate + 2 H(+)(out). In terms of biological role, catalyzes the hydrolysis of ATP coupled with the exchange of H(+) and K(+) ions across the plasma membrane. Responsible for potassium absorption in various tissues. This chain is Potassium-transporting ATPase alpha chain 2 (ATP12A), found in Cavia porcellus (Guinea pig).